Here is a 398-residue protein sequence, read N- to C-terminus: UPF0261 protein RA0729 (398 aa).

It belongs to the UPF0261 family.

The chain is UPF0261 protein RA0729 from Rhizobium meliloti (strain 1021) (Ensifer meliloti).